The chain runs to 405 residues: Argininosuccinate synthase (405 aa).

Residues 10 to 18 and Ala-37 each bind ATP; that span reads AYSGGLDTS. L-citrulline is bound by residues Tyr-88 and Ser-93. Gly-118 provides a ligand contact to ATP. L-aspartate contacts are provided by Thr-120, Asn-124, and Asp-125. L-citrulline is bound at residue Asn-124. Positions 128, 179, 188, 264, and 276 each coordinate L-citrulline.

This sequence belongs to the argininosuccinate synthase family. Type 1 subfamily. As to quaternary structure, homotetramer.

The protein resides in the cytoplasm. It catalyses the reaction L-citrulline + L-aspartate + ATP = 2-(N(omega)-L-arginino)succinate + AMP + diphosphate + H(+). It participates in amino-acid biosynthesis; L-arginine biosynthesis; L-arginine from L-ornithine and carbamoyl phosphate: step 2/3. The sequence is that of Argininosuccinate synthase from Pseudomonas aeruginosa (strain LESB58).